Reading from the N-terminus, the 241-residue chain is DnaJ homolog subfamily C member 4 (241 aa).

The region spanning 34-99 (TYYELLGVHP…QSRRSYDDQL (66 aa)) is the J domain. The segment covering 88-99 (REQSRRSYDDQL) has biased composition (basic and acidic residues). A disordered region spans residues 88–129 (REQSRRSYDDQLRSGSPPKSPRTTVHDKSAHQTHSSWTPPNA). Over residues 119–129 (QTHSSWTPPNA) the composition is skewed to polar residues. Residues 156 to 175 (VLGYCLLLMLAGMGLHYIAF) form a helical membrane-spanning segment. Positions 212 to 241 (QQERQRLGQRQPPPSEPTQGPEIVPRGAGP) are disordered.

The protein resides in the membrane. The polypeptide is DnaJ homolog subfamily C member 4 (DNAJC4) (Homo sapiens (Human)).